A 546-amino-acid chain; its full sequence is Mercuric reductase (546 aa).

An HMA domain is found at 2-66; the sequence is NKFKVNISGM…AIDEANYQAG (65 aa). A metal cation is bound by residues Cys-13 and Cys-16. Residues Ala-96, Gly-116, and Thr-121 each coordinate FAD. Cysteines 122 and 127 form a disulfide. Positions 131 and 195 each coordinate FAD. Residues 256–263 and Gly-346 each bind NAD(+); that span reads GSGYIGME. Asp-387 and Val-395 together coordinate FAD. The Hg(2+) site is built by Cys-543 and Cys-544.

This sequence belongs to the class-I pyridine nucleotide-disulfide oxidoreductase family. As to quaternary structure, homodimer. FAD serves as cofactor.

It catalyses the reaction Hg + NADP(+) + H(+) = Hg(2+) + NADPH. Its activity is regulated as follows. Uses NADPH as the preferred electron donor, but shows slight activity with NADH as well. Inhibited by Cu(2+), Cd(2+), Zn(2+) and Co(2+), with Cu(2+) showing the strongest inhibition. Enzyme activity is enhanced by b-mercaptoethanol and NaCl up to concentrations of 500 uM and 100 mM respectively, followed by inhibition at higher concentrations. Its function is as follows. Resistance to Hg(2+) in bacteria appears to be governed by a specialized system which includes mercuric reductase. MerA protein is responsible for volatilizing mercury as Hg(0). Catalyzes reduction of Hg(2+) to elemental Hg, which is volatile and can diffuse out of cells passively. Plays a pivotal role in mercury resistance and cell protection. This Lysinibacillus sphaericus (Bacillus sphaericus) protein is Mercuric reductase.